The primary structure comprises 362 residues: uncharacterized protein (362 aa).

Residues 314 to 323 (GEEKEPKQES) are compositionally biased toward basic and acidic residues. Residues 314-362 (GEEKEPKQESQEQLFNPFTIDEMLTEEQQQQQEEENNATEEEGDTVKLG) are disordered. The span at 345–356 (QEEENNATEEEG) shows a compositional bias: acidic residues.

This is an uncharacterized protein from Acidianus two-tailed virus (ATV).